Here is a 258-residue protein sequence, read N- to C-terminus: Leucyl/phenylalanyl-tRNA--protein transferase (258 aa).

Belongs to the L/F-transferase family.

The protein resides in the cytoplasm. The enzyme catalyses N-terminal L-lysyl-[protein] + L-leucyl-tRNA(Leu) = N-terminal L-leucyl-L-lysyl-[protein] + tRNA(Leu) + H(+). It catalyses the reaction N-terminal L-arginyl-[protein] + L-leucyl-tRNA(Leu) = N-terminal L-leucyl-L-arginyl-[protein] + tRNA(Leu) + H(+). It carries out the reaction L-phenylalanyl-tRNA(Phe) + an N-terminal L-alpha-aminoacyl-[protein] = an N-terminal L-phenylalanyl-L-alpha-aminoacyl-[protein] + tRNA(Phe). Functionally, functions in the N-end rule pathway of protein degradation where it conjugates Leu, Phe and, less efficiently, Met from aminoacyl-tRNAs to the N-termini of proteins containing an N-terminal arginine or lysine. The protein is Leucyl/phenylalanyl-tRNA--protein transferase of Alkalilimnicola ehrlichii (strain ATCC BAA-1101 / DSM 17681 / MLHE-1).